Reading from the N-terminus, the 139-residue chain is uncharacterized protein (139 aa).

This is an uncharacterized protein from Homo sapiens (Human).